Here is a 346-residue protein sequence, read N- to C-terminus: Quinolinate synthase (346 aa).

The iminosuccinate site is built by histidine 47 and serine 68. Cysteine 113 is a binding site for [4Fe-4S] cluster. Iminosuccinate contacts are provided by residues 139–141 (YAN) and serine 156. Residue cysteine 200 participates in [4Fe-4S] cluster binding. Residues 226-228 (HPE) and threonine 243 each bind iminosuccinate. Residue cysteine 297 participates in [4Fe-4S] cluster binding.

This sequence belongs to the quinolinate synthase family. Type 1 subfamily. The cofactor is [4Fe-4S] cluster.

It is found in the cytoplasm. It carries out the reaction iminosuccinate + dihydroxyacetone phosphate = quinolinate + phosphate + 2 H2O + H(+). The protein operates within cofactor biosynthesis; NAD(+) biosynthesis; quinolinate from iminoaspartate: step 1/1. Functionally, catalyzes the condensation of iminoaspartate with dihydroxyacetone phosphate to form quinolinate. This chain is Quinolinate synthase, found in Pseudoalteromonas translucida (strain TAC 125).